The primary structure comprises 248 residues: UPF0246 protein MYPE6270 (248 aa).

This sequence belongs to the UPF0246 family.

The protein is UPF0246 protein MYPE6270 of Malacoplasma penetrans (strain HF-2) (Mycoplasma penetrans).